A 364-amino-acid chain; its full sequence is Aminomethyltransferase (364 aa).

The protein belongs to the GcvT family. In terms of assembly, the glycine cleavage system is composed of four proteins: P, T, L and H.

The enzyme catalyses N(6)-[(R)-S(8)-aminomethyldihydrolipoyl]-L-lysyl-[protein] + (6S)-5,6,7,8-tetrahydrofolate = N(6)-[(R)-dihydrolipoyl]-L-lysyl-[protein] + (6R)-5,10-methylene-5,6,7,8-tetrahydrofolate + NH4(+). Functionally, the glycine cleavage system catalyzes the degradation of glycine. In Thermotoga sp. (strain RQ2), this protein is Aminomethyltransferase.